A 606-amino-acid polypeptide reads, in one-letter code: UPF0329 protein ECU06_0090 (606 aa).

The segment at 317–401 (KKEEERREEE…SREACSKERN (85 aa)) is disordered. Basic and acidic residues predominate over residues 328-353 (EKKRKEEVVQRNVEELLRGEEEEKKG). Basic residues predominate over residues 354 to 367 (AKAKRKSKKKKKGS). The span at 381–401 (SENREAQEMEDSREACSKERN) shows a compositional bias: basic and acidic residues.

It belongs to the UPF0329 family.

The chain is UPF0329 protein ECU06_0090 from Encephalitozoon cuniculi (strain GB-M1) (Microsporidian parasite).